The sequence spans 126 residues: Glycine cleavage system H protein (126 aa).

The Lipoyl-binding domain maps to 22 to 104 (VVFIGITDYA…YGAGWIIKVK (83 aa)). Position 63 is an N6-lipoyllysine (Lys-63).

This sequence belongs to the GcvH family. The glycine cleavage system is composed of four proteins: P, T, L and H. It depends on (R)-lipoate as a cofactor.

In terms of biological role, the glycine cleavage system catalyzes the degradation of glycine. The H protein shuttles the methylamine group of glycine from the P protein to the T protein. This Porphyromonas gingivalis (strain ATCC 33277 / DSM 20709 / CIP 103683 / JCM 12257 / NCTC 11834 / 2561) protein is Glycine cleavage system H protein.